A 220-amino-acid polypeptide reads, in one-letter code: Deoxyribose-phosphate aldolase 2 (220 aa).

Aspartate 89 functions as the Proton donor/acceptor in the catalytic mechanism. The active-site Schiff-base intermediate with acetaldehyde is the lysine 151. Lysine 180 (proton donor/acceptor) is an active-site residue.

This sequence belongs to the DeoC/FbaB aldolase family. DeoC type 1 subfamily.

It is found in the cytoplasm. The enzyme catalyses 2-deoxy-D-ribose 5-phosphate = D-glyceraldehyde 3-phosphate + acetaldehyde. The protein operates within carbohydrate degradation; 2-deoxy-D-ribose 1-phosphate degradation; D-glyceraldehyde 3-phosphate and acetaldehyde from 2-deoxy-alpha-D-ribose 1-phosphate: step 2/2. Functionally, catalyzes a reversible aldol reaction between acetaldehyde and D-glyceraldehyde 3-phosphate to generate 2-deoxy-D-ribose 5-phosphate. The chain is Deoxyribose-phosphate aldolase 2 from Staphylococcus aureus (strain N315).